A 332-amino-acid polypeptide reads, in one-letter code: 2,3-diketo-L-gulonate reductase (332 aa).

Catalysis depends on His-44, which acts as the Proton donor. NAD(+) contacts are provided by residues 168 to 174 (ITMVDMS), 224 to 225 (WK), and 304 to 306 (GHE).

This sequence belongs to the LDH2/MDH2 oxidoreductase family. DlgD subfamily. As to quaternary structure, homodimer.

The protein localises to the cytoplasm. The enzyme catalyses 3-dehydro-L-gulonate + NAD(+) = 2,3-dioxo-L-gulonate + NADH + H(+). The catalysed reaction is 3-dehydro-L-gulonate + NADP(+) = 2,3-dioxo-L-gulonate + NADPH + H(+). In terms of biological role, catalyzes the reduction of 2,3-diketo-L-gulonate in the presence of NADH, to form 3-keto-L-gulonate. The protein is 2,3-diketo-L-gulonate reductase of Haemophilus influenzae (strain ATCC 51907 / DSM 11121 / KW20 / Rd).